Consider the following 221-residue polypeptide: Phosphoribosylformylglycinamidine synthase subunit PurQ (221 aa).

Positions 6-221 constitute a Glutamine amidotransferase type-1 domain; it reads VGVVVFPGSN…LFTLKSLILK (216 aa). The Nucleophile role is filled by cysteine 89. Residues histidine 197 and glutamate 199 contribute to the active site.

As to quaternary structure, part of the FGAM synthase complex composed of 1 PurL, 1 PurQ and 2 PurS subunits.

It is found in the cytoplasm. It carries out the reaction N(2)-formyl-N(1)-(5-phospho-beta-D-ribosyl)glycinamide + L-glutamine + ATP + H2O = 2-formamido-N(1)-(5-O-phospho-beta-D-ribosyl)acetamidine + L-glutamate + ADP + phosphate + H(+). It catalyses the reaction L-glutamine + H2O = L-glutamate + NH4(+). The protein operates within purine metabolism; IMP biosynthesis via de novo pathway; 5-amino-1-(5-phospho-D-ribosyl)imidazole from N(2)-formyl-N(1)-(5-phospho-D-ribosyl)glycinamide: step 1/2. Part of the phosphoribosylformylglycinamidine synthase complex involved in the purines biosynthetic pathway. Catalyzes the ATP-dependent conversion of formylglycinamide ribonucleotide (FGAR) and glutamine to yield formylglycinamidine ribonucleotide (FGAM) and glutamate. The FGAM synthase complex is composed of three subunits. PurQ produces an ammonia molecule by converting glutamine to glutamate. PurL transfers the ammonia molecule to FGAR to form FGAM in an ATP-dependent manner. PurS interacts with PurQ and PurL and is thought to assist in the transfer of the ammonia molecule from PurQ to PurL. This is Phosphoribosylformylglycinamidine synthase subunit PurQ from Prochlorococcus marinus (strain MIT 9312).